A 215-amino-acid polypeptide reads, in one-letter code: Orotate phosphoribosyltransferase (215 aa).

Residue lysine 25 participates in 5-phospho-alpha-D-ribose 1-diphosphate binding. 33–34 provides a ligand contact to orotate; the sequence is FF. Residues 71–72, arginine 98, lysine 99, lysine 102, histidine 104, and 124–132 each bind 5-phospho-alpha-D-ribose 1-diphosphate; these read YK and DDVITAGTA. Orotate is bound by residues threonine 128 and arginine 156.

It belongs to the purine/pyrimidine phosphoribosyltransferase family. PyrE subfamily. As to quaternary structure, homodimer.

The catalysed reaction is orotidine 5'-phosphate + diphosphate = orotate + 5-phospho-alpha-D-ribose 1-diphosphate. It functions in the pathway pyrimidine metabolism; UMP biosynthesis via de novo pathway; UMP from orotate: step 1/2. Catalyzes the transfer of a ribosyl phosphate group from 5-phosphoribose 1-diphosphate to orotate, leading to the formation of orotidine monophosphate (OMP). This Schizosaccharomyces pombe (strain 972 / ATCC 24843) (Fission yeast) protein is Orotate phosphoribosyltransferase (ura5).